The sequence spans 202 residues: dITP/XTP pyrophosphatase (202 aa).

7-12 (TTNEGK) is a binding site for substrate. Mg(2+)-binding residues include Glu-37 and Asp-66. The Proton acceptor role is filled by Asp-66. Substrate contacts are provided by residues Ser-67, 155 to 158 (FGYD), Lys-178, and 183 to 184 (HR).

Belongs to the HAM1 NTPase family. In terms of assembly, homodimer. It depends on Mg(2+) as a cofactor.

The catalysed reaction is XTP + H2O = XMP + diphosphate + H(+). It catalyses the reaction dITP + H2O = dIMP + diphosphate + H(+). The enzyme catalyses ITP + H2O = IMP + diphosphate + H(+). Functionally, pyrophosphatase that catalyzes the hydrolysis of nucleoside triphosphates to their monophosphate derivatives, with a high preference for the non-canonical purine nucleotides XTP (xanthosine triphosphate), dITP (deoxyinosine triphosphate) and ITP. Seems to function as a house-cleaning enzyme that removes non-canonical purine nucleotides from the nucleotide pool, thus preventing their incorporation into DNA/RNA and avoiding chromosomal lesions. This Aquifex aeolicus (strain VF5) protein is dITP/XTP pyrophosphatase.